The following is a 917-amino-acid chain: Intercellular adhesion molecule 5 (917 aa).

The N-terminal stretch at 1-31 (MPGPSPGLRRALLGLWAALGLGILGISAVAL) is a signal peptide. At 32–833 (EPFWADLQPR…RITVRVAGPW (802 aa)) the chain is on the extracellular side. Ig-like C2-type domains are found at residues 48–130 (GGSL…PLPS), 135–235 (GENF…SLIA), 242–329 (DSER…LLTL), 337–402 (GKMV…SSEL), 408–486 (PRLD…VTLT), 491–567 (PALD…VAVT), 572–651 (PSFE…NRHG), 665–738 (PQMD…RTVT), and 745–828 (PVVA…ITVR). Residue Asn-54 is glycosylated (N-linked (GlcNAc...) (high mannose) asparagine). 2 cysteine pairs are disulfide-bonded: Cys-55-Cys-99 and Cys-59-Cys-103. 2 N-linked (GlcNAc...) asparagine glycosylation sites follow: Asn-74 and Asn-137. Cys-142 and Cys-198 form a disulfide bridge. Thr-182 is modified (phosphothreonine). Asn-195, Asn-214, Asn-274, Asn-316, Asn-371, and Asn-397 each carry an N-linked (GlcNAc...) asparagine glycan. A disulfide bridge connects residues Cys-249 and Cys-302. An intrachain disulfide couples Cys-344 to Cys-383. 3 disulfides stabilise this stretch: Cys-415-Cys-470, Cys-498-Cys-551, and Cys-579-Cys-644. Residues Asn-582 and Asn-645 are each glycosylated (N-linked (GlcNAc...) asparagine). Cys-672 and Cys-724 are oxidised to a cystine. 3 N-linked (GlcNAc...) asparagine glycosylation sites follow: Asn-762, Asn-793, and Asn-794. Residues Cys-767 and Cys-812 are joined by a disulfide bond. The chain crosses the membrane as a helical span at residues 834–854 (LWVAVGGAAGGAALLAAGAGL). Topologically, residues 855 to 917 (AFYVQSTACK…EVFAIQLTSS (63 aa)) are cytoplasmic. The span at 884–893 (GAGGTPGAEG) shows a compositional bias: gly residues. Positions 884–908 (GAGGTPGAEGGAETPGTAESPADGE) are disordered.

It belongs to the immunoglobulin superfamily. ICAM family. Glycosylation at Asn-54 is critical for functional folding. Expressed on neurons in the most rostral segment of the mammalian brain, the telencephalon.

It localises to the membrane. ICAM proteins are ligands for the leukocyte adhesion protein LFA-1 (integrin alpha-L/beta-2). The sequence is that of Intercellular adhesion molecule 5 (Icam5) from Mus musculus (Mouse).